Consider the following 395-residue polypeptide: Ribose-phosphate pyrophosphokinase 2, chloroplastic (395 aa).

Positions 1 to 23 (MASPAPRSLSSSSSSSSSSFCPS) are enriched in low complexity. The tract at residues 1 to 33 (MASPAPRSLSSSSSSSSSSFCPSISPPPRSPSR) is disordered. A chloroplast-targeting transit peptide spans 1-42 (MASPAPRSLSSSSSSSSSSFCPSISPPPRSPSRASLPFSVKC). Aspartate 209, histidine 211, aspartate 220, and aspartate 224 together coordinate Mg(2+). The segment at 295-310 (GKVAVMLDDMIDTAGT) is binding of phosphoribosylpyrophosphate.

This sequence belongs to the ribose-phosphate pyrophosphokinase family.

It is found in the plastid. The protein resides in the chloroplast. It carries out the reaction D-ribose 5-phosphate + ATP = 5-phospho-alpha-D-ribose 1-diphosphate + AMP + H(+). The chain is Ribose-phosphate pyrophosphokinase 2, chloroplastic (PRS2) from Spinacia oleracea (Spinach).